A 638-amino-acid polypeptide reads, in one-letter code: 1-deoxy-D-xylulose-5-phosphate synthase (638 aa).

Thiamine diphosphate contacts are provided by residues His75 and 116 to 118 (AHS). Residue Asp147 coordinates Mg(2+). Residues 148-149 (GA), Asn177, Tyr288, and Glu370 contribute to the thiamine diphosphate site. Asn177 serves as a coordination point for Mg(2+).

This sequence belongs to the transketolase family. DXPS subfamily. Homodimer. Mg(2+) is required as a cofactor. Thiamine diphosphate serves as cofactor.

The enzyme catalyses D-glyceraldehyde 3-phosphate + pyruvate + H(+) = 1-deoxy-D-xylulose 5-phosphate + CO2. The protein operates within metabolic intermediate biosynthesis; 1-deoxy-D-xylulose 5-phosphate biosynthesis; 1-deoxy-D-xylulose 5-phosphate from D-glyceraldehyde 3-phosphate and pyruvate: step 1/1. Functionally, catalyzes the acyloin condensation reaction between C atoms 2 and 3 of pyruvate and glyceraldehyde 3-phosphate to yield 1-deoxy-D-xylulose-5-phosphate (DXP). This chain is 1-deoxy-D-xylulose-5-phosphate synthase, found in Cupriavidus taiwanensis (strain DSM 17343 / BCRC 17206 / CCUG 44338 / CIP 107171 / LMG 19424 / R1) (Ralstonia taiwanensis (strain LMG 19424)).